A 477-amino-acid chain; its full sequence is Ribulose bisphosphate carboxylase large chain (477 aa).

Positions 1–2 are excised as a propeptide; it reads MS. Pro3 is subject to N-acetylproline. Lys14 carries the N6,N6,N6-trimethyllysine modification. Positions 123 and 173 each coordinate substrate. Lys175 serves as the catalytic Proton acceptor. Substrate is bound at residue Lys177. Residues Lys201, Asp203, and Glu204 each contribute to the Mg(2+) site. Lys201 carries the N6-carboxylysine modification. Catalysis depends on His294, which acts as the Proton acceptor. Substrate-binding residues include Arg295, His327, and Ser379.

The protein belongs to the RuBisCO large chain family. Type I subfamily. As to quaternary structure, heterohexadecamer of 8 large chains and 8 small chains; disulfide-linked. The disulfide link is formed within the large subunit homodimers. Mg(2+) is required as a cofactor. Post-translationally, the disulfide bond which can form in the large chain dimeric partners within the hexadecamer appears to be associated with oxidative stress and protein turnover.

It is found in the plastid. The protein resides in the chloroplast. It carries out the reaction 2 (2R)-3-phosphoglycerate + 2 H(+) = D-ribulose 1,5-bisphosphate + CO2 + H2O. The catalysed reaction is D-ribulose 1,5-bisphosphate + O2 = 2-phosphoglycolate + (2R)-3-phosphoglycerate + 2 H(+). RuBisCO catalyzes two reactions: the carboxylation of D-ribulose 1,5-bisphosphate, the primary event in carbon dioxide fixation, as well as the oxidative fragmentation of the pentose substrate in the photorespiration process. Both reactions occur simultaneously and in competition at the same active site. This chain is Ribulose bisphosphate carboxylase large chain (rbcL), found in Solanum lycopersicum (Tomato).